Here is a 262-residue protein sequence, read N- to C-terminus: Acyl-[acyl-carrier-protein]--UDP-N-acetylglucosamine O-acyltransferase (262 aa).

The protein belongs to the transferase hexapeptide repeat family. LpxA subfamily. In terms of assembly, homotrimer.

The protein resides in the cytoplasm. The enzyme catalyses a (3R)-hydroxyacyl-[ACP] + UDP-N-acetyl-alpha-D-glucosamine = a UDP-3-O-[(3R)-3-hydroxyacyl]-N-acetyl-alpha-D-glucosamine + holo-[ACP]. Its pathway is glycolipid biosynthesis; lipid IV(A) biosynthesis; lipid IV(A) from (3R)-3-hydroxytetradecanoyl-[acyl-carrier-protein] and UDP-N-acetyl-alpha-D-glucosamine: step 1/6. Its function is as follows. Involved in the biosynthesis of lipid A, a phosphorylated glycolipid that anchors the lipopolysaccharide to the outer membrane of the cell. The sequence is that of Acyl-[acyl-carrier-protein]--UDP-N-acetylglucosamine O-acyltransferase from Psychromonas ingrahamii (strain DSM 17664 / CCUG 51855 / 37).